A 638-amino-acid polypeptide reads, in one-letter code: Epithelial sodium channel subunit beta (638 aa).

Residues 1–50 (MPVKKYLLKCLHRLQKGPGYTYKELLVWYCNNTNTHGPKRIICEGPKKKA) are Cytoplasmic-facing. A helical transmembrane segment spans residues 51-71 (MWFLLTLLFACLVCWQWGVFI). The Extracellular portion of the chain corresponds to 72 to 530 (QTYLSWEVSV…GGQFGFWMGG (459 aa)). Cystine bridges form between C98–C270, C182–C187, C194–C201, C247–C254, C359–C446, C384–C442, C388–C438, C397–C424, and C399–C413. 2 N-linked (GlcNAc...) asparagine glycosylation sites follow: N135 and N141. A helical membrane pass occupies residues 531–551 (SVLCLIEFGEIIIDFIWITVI). The Cytoplasmic segment spans residues 552–638 (KLVASCKGLR…MESDSEVEAI (87 aa)). Positions 598–620 (NAEVYPDQQTLPIPGTPPPNYDS) are disordered. A PY motif; recruits WW domain-containing proteins and is thereby required for ubiquitination and inhibition of the channel by NEDD4 and NEDD4L motif is present at residues 614–618 (PPPNY). A phosphoserine mark is found at S631 and S633.

It belongs to the amiloride-sensitive sodium channel (TC 1.A.6) family. SCNN1B subfamily. In terms of assembly, component of the heterotrimeric epithelial sodium channel (ENaC) composed of an alpha/SCNN1A, a beta/SCNN1B and a gamma/SCNN1G subunit. Interacts with WWP1 (via WW domains). Interacts with WWP2 (via WW domains). Interacts with the full-length immature form of PCSK9 (pro-PCSK9). Interacts (N-glycosylated) with BPIFA1; the interaction is direct and inhibits the proteolytic processing of SCNN1A and SCNN1G and the activation of ENaC. Post-translationally, ubiquitinated. Can be ubiquitinated at multiple sites and undergo monoubiquitination and polyubiquitination. Ubiquitination by NEDD4 or NEDD4L inhibits the ENaC channel through endocytosis, intracellular retention and degradation of its individual subunits. However, some studies could not confirm the ubiquitination of this subunit of the ENaC. N-glycosylated. N-glycosylation is required for interaction with BPIFA1. In terms of processing, phosphorylated on serine and threonine residues. Aldosterone and insulin increase the basal level of phosphorylation. Expressed in lung and epididymis. In the caput region of the epididymis, expressed at the luminal and basolateral surfaces of the ducts and in the smooth muscle coat. In the caudal region of the epididymis, expressed along the luminal border but not continuously, in the smooth muscle coat, in the interstitial muscle tissue and in sperm in the caudal lumen.

The protein resides in the apical cell membrane. Its subcellular location is the cytoplasmic vesicle membrane. The catalysed reaction is Na(+)(in) = Na(+)(out). Its activity is regulated as follows. Originally identified and characterized by its inhibition by the diuretic drug amiloride. This is one of the three pore-forming subunits of the heterotrimeric epithelial sodium channel (ENaC), a critical regulator of sodium balance and fluid homeostasis. ENaC operates in epithelial tissues, where it mediates the electrodiffusion of sodium ions from extracellular fluid through the apical membrane of cells, with water following osmotically. It plays a key role in maintaining sodium homeostasis through electrogenic sodium reabsorption in the kidneys. This subunit is not essential for ENaC function in airway surface liquid homeostasis and proper mucus clearance. The protein is Epithelial sodium channel subunit beta of Rattus norvegicus (Rat).